Reading from the N-terminus, the 143-residue chain is Nucleoside diphosphate kinase (143 aa).

Residues lysine 11, phenylalanine 59, arginine 87, threonine 93, arginine 104, and asparagine 114 each contribute to the ATP site. Histidine 117 serves as the catalytic Pros-phosphohistidine intermediate.

Belongs to the NDK family. As to quaternary structure, homotetramer. The cofactor is Mg(2+).

The protein localises to the cytoplasm. The catalysed reaction is a 2'-deoxyribonucleoside 5'-diphosphate + ATP = a 2'-deoxyribonucleoside 5'-triphosphate + ADP. The enzyme catalyses a ribonucleoside 5'-diphosphate + ATP = a ribonucleoside 5'-triphosphate + ADP. Its function is as follows. Major role in the synthesis of nucleoside triphosphates other than ATP. The ATP gamma phosphate is transferred to the NDP beta phosphate via a ping-pong mechanism, using a phosphorylated active-site intermediate. The chain is Nucleoside diphosphate kinase from Klebsiella pneumoniae (strain 342).